The following is a 95-amino-acid chain: Mammaglobin-B (95 aa).

Positions 1 to 18 (MKLLMVLMLAALLLHCYA) are cleaved as a signal peptide. An N-linked (GlcNAc...) asparagine glycan is attached at N68.

As to quaternary structure, heterodimer of a lipophilin A and a lipophilin C (mammaglobin B) monomer associated head to head. In terms of tissue distribution, expressed in thymus, trachea, kidney, steroid responsive tissues (prostate, testis, uterus, breast and ovary) and salivary gland.

The protein resides in the secreted. In terms of biological role, may bind androgens and other steroids, may also bind estramustine, a chemotherapeutic agent used for prostate cancer. May be under transcriptional regulation of steroid hormones. The chain is Mammaglobin-B (SCGB2A1) from Homo sapiens (Human).